Consider the following 607-residue polypeptide: Elongation factor 4 (607 aa).

The tr-type G domain occupies 11 to 193 (SKIRNFSIIA…QIVEKVPAPA (183 aa)). GTP contacts are provided by residues 23 to 28 (DHGKST) and 140 to 143 (NKID).

It belongs to the TRAFAC class translation factor GTPase superfamily. Classic translation factor GTPase family. LepA subfamily.

The protein localises to the cell membrane. It catalyses the reaction GTP + H2O = GDP + phosphate + H(+). Functionally, required for accurate and efficient protein synthesis under certain stress conditions. May act as a fidelity factor of the translation reaction, by catalyzing a one-codon backward translocation of tRNAs on improperly translocated ribosomes. Back-translocation proceeds from a post-translocation (POST) complex to a pre-translocation (PRE) complex, thus giving elongation factor G a second chance to translocate the tRNAs correctly. Binds to ribosomes in a GTP-dependent manner. The sequence is that of Elongation factor 4 from Bacillus cereus (strain B4264).